We begin with the raw amino-acid sequence, 369 residues long: 2-aminoethylphosphonate--pyruvate transaminase 1 (369 aa).

Residue K191 is modified to N6-(pyridoxal phosphate)lysine.

Belongs to the class-V pyridoxal-phosphate-dependent aminotransferase family. PhnW subfamily. As to quaternary structure, homodimer. It depends on pyridoxal 5'-phosphate as a cofactor.

The enzyme catalyses (2-aminoethyl)phosphonate + pyruvate = phosphonoacetaldehyde + L-alanine. In terms of biological role, involved in phosphonate degradation. The chain is 2-aminoethylphosphonate--pyruvate transaminase 1 from Burkholderia lata (strain ATCC 17760 / DSM 23089 / LMG 22485 / NCIMB 9086 / R18194 / 383).